Reading from the N-terminus, the 808-residue chain is Sucrose synthase 4 (808 aa).

The interval 277 to 754 (MVFNVVILSP…GLERIQEKYT (478 aa)) is GT-B glycosyltransferase.

This sequence belongs to the glycosyltransferase 1 family. Plant sucrose synthase subfamily. As to expression, detected in the whole plant with highest expression in young rosette leaves and roots.

It carries out the reaction an NDP-alpha-D-glucose + D-fructose = a ribonucleoside 5'-diphosphate + sucrose + H(+). Its function is as follows. Sucrose-cleaving enzyme that provides UDP-glucose and fructose for various metabolic pathways. This is Sucrose synthase 4 (SUS4) from Arabidopsis thaliana (Mouse-ear cress).